Here is a 204-residue protein sequence, read N- to C-terminus: Lysozyme g (204 aa).

Residues 1 to 19 (MHLMLVLLGLAALLGTSQS) form the signal peptide. Cystine bridges form between C23–C79 and C37–C48. Catalysis depends on residues E92 and D105.

This sequence belongs to the glycosyl hydrolase 23 family.

Its subcellular location is the secreted. It catalyses the reaction Hydrolysis of (1-&gt;4)-beta-linkages between N-acetylmuramic acid and N-acetyl-D-glucosamine residues in a peptidoglycan and between N-acetyl-D-glucosamine residues in chitodextrins.. Has bacteriolytic activity against M.luteus. This Struthio camelus (Common ostrich) protein is Lysozyme g.